The following is a 94-amino-acid chain: Phosphoribosyl-ATP pyrophosphatase (94 aa).

This sequence belongs to the PRA-PH family.

The protein localises to the cytoplasm. It catalyses the reaction 1-(5-phospho-beta-D-ribosyl)-ATP + H2O = 1-(5-phospho-beta-D-ribosyl)-5'-AMP + diphosphate + H(+). The protein operates within amino-acid biosynthesis; L-histidine biosynthesis; L-histidine from 5-phospho-alpha-D-ribose 1-diphosphate: step 2/9. This is Phosphoribosyl-ATP pyrophosphatase from Pyrobaculum neutrophilum (strain DSM 2338 / JCM 9278 / NBRC 100436 / V24Sta) (Thermoproteus neutrophilus).